We begin with the raw amino-acid sequence, 383 residues long: Anhydro-N-acetylmuramic acid kinase (383 aa).

Residue 9 to 16 (GTSLDGID) coordinates ATP.

This sequence belongs to the anhydro-N-acetylmuramic acid kinase family.

It catalyses the reaction 1,6-anhydro-N-acetyl-beta-muramate + ATP + H2O = N-acetyl-D-muramate 6-phosphate + ADP + H(+). It functions in the pathway amino-sugar metabolism; 1,6-anhydro-N-acetylmuramate degradation. It participates in cell wall biogenesis; peptidoglycan recycling. Functionally, catalyzes the specific phosphorylation of 1,6-anhydro-N-acetylmuramic acid (anhMurNAc) with the simultaneous cleavage of the 1,6-anhydro ring, generating MurNAc-6-P. Is required for the utilization of anhMurNAc either imported from the medium or derived from its own cell wall murein, and thus plays a role in cell wall recycling. The polypeptide is Anhydro-N-acetylmuramic acid kinase (Clostridioides difficile (strain 630) (Peptoclostridium difficile)).